The following is a 330-amino-acid chain: Quinone oxidoreductase (330 aa).

Alanine 2 is modified (N-acetylalanine). N6-acetyllysine is present on lysine 23. NADP(+) contacts are provided by residues tyrosine 53, 158–161 (SGGV), glycine 181, histidine 200, asparagine 229, 246–249 (VGSK), and 269–271 (VTL). At serine 248 the chain carries Phosphoserine.

It belongs to the zinc-containing alcohol dehydrogenase family. Quinone oxidoreductase subfamily. Homotetramer.

It is found in the cytoplasm. The catalysed reaction is 2 a quinone + NADPH + H(+) = 2 a 1,4-benzosemiquinone + NADP(+). Functionally, does not have alcohol dehydrogenase activity. Binds NADP and acts through a one-electron transfer process. Orthoquinones, such as 1,2-naphthoquinone or 9,10-phenanthrenequinone, are the best substrates (in vitro). May act in the detoxification of xenobiotics. Interacts with (AU)-rich elements (ARE) in the 3'-UTR of target mRNA species and enhances their stability. NADPH binding interferes with mRNA binding. The sequence is that of Quinone oxidoreductase (CRYZ) from Lama guanicoe (Guanaco).